A 474-amino-acid polypeptide reads, in one-letter code: Glycogen synthase (474 aa).

Residue K15 coordinates ADP-alpha-D-glucose.

It belongs to the glycosyltransferase 1 family. Bacterial/plant glycogen synthase subfamily.

The enzyme catalyses [(1-&gt;4)-alpha-D-glucosyl](n) + ADP-alpha-D-glucose = [(1-&gt;4)-alpha-D-glucosyl](n+1) + ADP + H(+). The protein operates within glycan biosynthesis; glycogen biosynthesis. Functionally, synthesizes alpha-1,4-glucan chains using ADP-glucose. The polypeptide is Glycogen synthase (Chlamydia trachomatis serovar L2b (strain UCH-1/proctitis)).